The following is a 274-amino-acid chain: uncharacterized protein (274 aa).

Positions 253–274 (QTGDVRTTEGTALTDDTTKRNI) are disordered.

This is an uncharacterized protein from Deinococcus radiodurans (strain ATCC 13939 / DSM 20539 / JCM 16871 / CCUG 27074 / LMG 4051 / NBRC 15346 / NCIMB 9279 / VKM B-1422 / R1).